Here is a 309-residue protein sequence, read N- to C-terminus: GalNAc(5)-diNAcBac-PP-undecaprenol beta-1,3-glucosyltransferase (309 aa).

Residues 273–291 (SLSIKINAPALILLILSII) traverse the membrane as a helical segment.

Belongs to the glycosyltransferase 2 family.

Its subcellular location is the membrane. The catalysed reaction is [alpha-D-GalNAc-(1-&gt;4)]4-alpha-D-GalNAc-(1-&gt;3)-alpha-D-diNAcBac-tri-trans,hepta-cis-undecaprenyl diphosphate + UDP-alpha-D-glucose = [alpha-D-GalNAc-(1-&gt;4)]2-[beta-D-Glc-(1-&gt;3)]-[alpha-D-GalNAc-(1-&gt;4)]2-alpha-D-GalNAc-(1-&gt;3)-alpha-D-diNAcBac-tri-trans,hepta-cis-undecaprenyl diphosphate + UDP + H(+). It participates in protein modification; protein glycosylation. Glucosyltransferase that adds he final branching glucose to complete the final heptasaccharide structure in the N-linked protein glycosylation pathway. The protein is GalNAc(5)-diNAcBac-PP-undecaprenol beta-1,3-glucosyltransferase (pglI) of Campylobacter jejuni subsp. jejuni serotype O:2 (strain ATCC 700819 / NCTC 11168).